We begin with the raw amino-acid sequence, 235 residues long: MINVLIVEDDPMVGELNKRYLSQIDGFQLKGIASSFQSALHILGEHHIDLILLDIYMPGKNGLELLTELRAQNEAVDVIVISAASELDVIKKTLRYGAVDYLIKPFEFERFQTALSDYRRKQKVYSTHRNMSQKELDAELFQKKEATEKVQLPKGLTKSTLKLIWSSIQSFENESFTTEDLAKHTEISQVSIRKYLKFLEDIQVLNVEMAYGTIGRPVFQYNVNNSNINGIKQYL.

The region spanning 3 to 119 (NVLIVEDDPM…RFQTALSDYR (117 aa)) is the Response regulatory domain. Aspartate 54 carries the post-translational modification 4-aspartylphosphate. A DNA-binding region (H-T-H motif) is located at residues 178–197 (TEDLAKHTEISQVSIRKYLK).

In terms of processing, phosphorylated and activated by MalK.

The protein localises to the cytoplasm. In terms of biological role, member of a two-component regulatory system MalK/MalR. Activates transcription of maeA, maeN and yflS in presence of malate by binding to their promoter region. The sequence is that of Transcriptional regulatory protein MalR (malR) from Bacillus subtilis (strain 168).